We begin with the raw amino-acid sequence, 246 residues long: Probable transcriptional regulatory protein WD_0484 (246 aa).

The segment at 1–22 (MAGHSQFSNIKHRKGAQDAKRS) is disordered.

Belongs to the TACO1 family.

It is found in the cytoplasm. The protein is Probable transcriptional regulatory protein WD_0484 of Wolbachia pipientis wMel.